We begin with the raw amino-acid sequence, 181 residues long: Crossover junction endodeoxyribonuclease RuvC (181 aa).

Residues D7, E67, and D139 contribute to the active site. Mg(2+)-binding residues include D7, E67, and D139.

The protein belongs to the RuvC family. As to quaternary structure, homodimer which binds Holliday junction (HJ) DNA. The HJ becomes 2-fold symmetrical on binding to RuvC with unstacked arms; it has a different conformation from HJ DNA in complex with RuvA. In the full resolvosome a probable DNA-RuvA(4)-RuvB(12)-RuvC(2) complex forms which resolves the HJ. Requires Mg(2+) as cofactor.

It is found in the cytoplasm. It carries out the reaction Endonucleolytic cleavage at a junction such as a reciprocal single-stranded crossover between two homologous DNA duplexes (Holliday junction).. The RuvA-RuvB-RuvC complex processes Holliday junction (HJ) DNA during genetic recombination and DNA repair. Endonuclease that resolves HJ intermediates. Cleaves cruciform DNA by making single-stranded nicks across the HJ at symmetrical positions within the homologous arms, yielding a 5'-phosphate and a 3'-hydroxyl group; requires a central core of homology in the junction. The consensus cleavage sequence is 5'-(A/T)TT(C/G)-3'. Cleavage occurs on the 3'-side of the TT dinucleotide at the point of strand exchange. HJ branch migration catalyzed by RuvA-RuvB allows RuvC to scan DNA until it finds its consensus sequence, where it cleaves and resolves the cruciform DNA. This is Crossover junction endodeoxyribonuclease RuvC from Cupriavidus pinatubonensis (strain JMP 134 / LMG 1197) (Cupriavidus necator (strain JMP 134)).